The following is a 360-amino-acid chain: Peptide chain release factor 1 (360 aa).

Q235 is subject to N5-methylglutamine. The interval A284 to P313 is disordered.

Belongs to the prokaryotic/mitochondrial release factor family. Post-translationally, methylated by PrmC. Methylation increases the termination efficiency of RF1.

It localises to the cytoplasm. Its function is as follows. Peptide chain release factor 1 directs the termination of translation in response to the peptide chain termination codons UAG and UAA. This Escherichia coli (strain UTI89 / UPEC) protein is Peptide chain release factor 1.